Reading from the N-terminus, the 108-residue chain is MTVITTLGLFIITAIAEIVGCYLPYLWLKKGASAWVLLPAAISLALFAWLLTLHPTAAGRVYAAYGGVYVTIAIVWLWGVDGIQPHRWDLAGVVLMLAGMAVIMFAPR.

A run of 4 helical transmembrane segments spans residues 3 to 23, 31 to 51, 63 to 83, and 87 to 107; these read VITTLGLFIITAIAEIVGCYL, GASAWVLLPAAISLALFAWLL, AAYGGVYVTIAIVWLWGVDGI, and RWDLAGVVLMLAGMAVIMFAP.

Belongs to the UPF0060 family.

Its subcellular location is the cell inner membrane. The protein is UPF0060 membrane protein Sputw3181_1172 of Shewanella sp. (strain W3-18-1).